A 434-amino-acid chain; its full sequence is Histidinol dehydrogenase (434 aa).

NAD(+) contacts are provided by Tyr-130, Gln-188, and Asn-211. Positions 237, 259, and 262 each coordinate substrate. Zn(2+) is bound by residues Gln-259 and His-262. Catalysis depends on proton acceptor residues Glu-326 and His-327. 4 residues coordinate substrate: His-327, Asp-360, Glu-414, and His-419. Residue Asp-360 coordinates Zn(2+). Residue His-419 coordinates Zn(2+).

It belongs to the histidinol dehydrogenase family. As to quaternary structure, homodimer. Requires Zn(2+) as cofactor.

The enzyme catalyses L-histidinol + 2 NAD(+) + H2O = L-histidine + 2 NADH + 3 H(+). It participates in amino-acid biosynthesis; L-histidine biosynthesis; L-histidine from 5-phospho-alpha-D-ribose 1-diphosphate: step 9/9. Catalyzes the sequential NAD-dependent oxidations of L-histidinol to L-histidinaldehyde and then to L-histidine. This chain is Histidinol dehydrogenase, found in Salmonella paratyphi A (strain ATCC 9150 / SARB42).